The following is a 329-amino-acid chain: MTRTPVNVTVTGAAGQIGYALLFRIASGHLLGPDVPVNLRLLEIPQGLKAAEGTAMELDDCAFPLLRGIEITDDPNVGFAGANVALLVGARPRTKGMERGDLLAANGGIFKPQGKAINDHAADDIKVLVVGNPANTNALIAQAAAPDVPAERFTAMTRLDHNRAISQLAAKTGAAVSDIKKLTIWGNHSATQYPDIFHAEIAGKNAAETVNDEVWLADTFIPTVAKRGAAIIEARGASSAASAANAAIDHVHTWVNGTAEGDWTSMGIPSDGSYGVPEGIISSFPVTTKDGKYEIVQGLDINEFSRTRIDASVKELTEERDAVRELGLI.

12 to 18 contributes to the NAD(+) binding site; the sequence is GAAGQIG. Residues Arg-93 and Arg-99 each coordinate substrate. Residues Asn-106, Gln-113, and 130-132 each bind NAD(+); that span reads VGN. Positions 132 and 163 each coordinate substrate. His-188 functions as the Proton acceptor in the catalytic mechanism.

This sequence belongs to the LDH/MDH superfamily. MDH type 2 family.

It carries out the reaction (S)-malate + NAD(+) = oxaloacetate + NADH + H(+). Catalyzes the reversible oxidation of malate to oxaloacetate. The polypeptide is Malate dehydrogenase (Streptomyces griseus subsp. griseus (strain JCM 4626 / CBS 651.72 / NBRC 13350 / KCC S-0626 / ISP 5235)).